An 83-amino-acid chain; its full sequence is uncharacterized protein (83 aa).

This sequence belongs to the chlamydial CPn_0711/CT_665/TC_0036 family.

This is an uncharacterized protein from Chlamydia trachomatis serovar D (strain ATCC VR-885 / DSM 19411 / UW-3/Cx).